The following is a 563-amino-acid chain: Delta-1-pyrroline-5-carboxylate dehydrogenase, mitochondrial (563 aa).

Residues 1 to 23 (MLPPALLRRSLLSYAWRGSGLRW) constitute a mitochondrion transit peptide. At lysine 30 the chain carries N6-succinyllysine. The residue at position 43 (serine 43) is a Phosphoserine. Lysine 51 carries the post-translational modification N6-acetyllysine. Residues lysine 92, lysine 98, lysine 113, lysine 129, and lysine 174 each carry the N6-acetyllysine; alternate modification. Residues lysine 92, lysine 98, lysine 113, lysine 129, and lysine 174 each carry the N6-succinyllysine; alternate modification. Residues serine 207, lysine 232, and 285–289 (GSVPT) contribute to the NAD(+) site. Glutamate 313 serves as the catalytic Proton acceptor. N6-acetyllysine is present on lysine 317. N6-succinyllysine is present on lysine 346. Catalysis depends on cysteine 347, which acts as the Nucleophile. N6-acetyllysine occurs at positions 364 and 375. Lysine 394 carries the N6-succinyllysine modification. NAD(+) is bound at residue glutamate 446. Lysine 461 carries the post-translational modification N6-acetyllysine. An N6-acetyllysine; alternate modification is found at lysine 508. Position 508 is an N6-succinyllysine; alternate (lysine 508). Residue serine 512 participates in substrate binding.

It belongs to the aldehyde dehydrogenase family. Homodimer.

It localises to the mitochondrion matrix. It carries out the reaction L-glutamate 5-semialdehyde + NAD(+) + H2O = L-glutamate + NADH + 2 H(+). It functions in the pathway amino-acid degradation; L-proline degradation into L-glutamate; L-glutamate from L-proline: step 2/2. In terms of biological role, irreversible conversion of delta-1-pyrroline-5-carboxylate (P5C), derived either from proline or ornithine, to glutamate. This is a necessary step in the pathway interconnecting the urea and tricarboxylic acid cycles. The preferred substrate is glutamic gamma-semialdehyde, other substrates include succinic, glutaric and adipic semialdehydes. The polypeptide is Delta-1-pyrroline-5-carboxylate dehydrogenase, mitochondrial (Aldh4a1) (Rattus norvegicus (Rat)).